We begin with the raw amino-acid sequence, 219 residues long: Probable GTP-binding protein EngB (219 aa).

Positions 26–200 (EGVEIAFAGR…RAKLDTWFAP (175 aa)) constitute an EngB-type G domain. GTP is bound by residues 34–41 (GRSNAGKS), 61–65 (GRTQL), 79–82 (DLPG), 146–149 (TKAD), and 179–181 (FSS). Residues S41 and T63 each coordinate Mg(2+).

This sequence belongs to the TRAFAC class TrmE-Era-EngA-EngB-Septin-like GTPase superfamily. EngB GTPase family. Mg(2+) is required as a cofactor.

In terms of biological role, necessary for normal cell division and for the maintenance of normal septation. The polypeptide is Probable GTP-binding protein EngB (Vibrio parahaemolyticus serotype O3:K6 (strain RIMD 2210633)).